A 351-amino-acid chain; its full sequence is 3-dehydroquinate synthase (351 aa).

NAD(+)-binding positions include 126–127, Lys-138, and Lys-147; that span reads TT. Residues Glu-180, His-244, and His-260 each coordinate Zn(2+).

Belongs to the sugar phosphate cyclases superfamily. Dehydroquinate synthase family. It depends on Co(2+) as a cofactor. The cofactor is Zn(2+). Requires NAD(+) as cofactor.

It localises to the cytoplasm. It carries out the reaction 7-phospho-2-dehydro-3-deoxy-D-arabino-heptonate = 3-dehydroquinate + phosphate. It functions in the pathway metabolic intermediate biosynthesis; chorismate biosynthesis; chorismate from D-erythrose 4-phosphate and phosphoenolpyruvate: step 2/7. Its function is as follows. Catalyzes the conversion of 3-deoxy-D-arabino-heptulosonate 7-phosphate (DAHP) to dehydroquinate (DHQ). This is 3-dehydroquinate synthase from Exiguobacterium sp. (strain ATCC BAA-1283 / AT1b).